Here is a 188-residue protein sequence, read N- to C-terminus: dCTP deaminase (188 aa).

107–112 (KSTYAR) is a binding site for dCTP. Glutamate 133 acts as the Proton donor/acceptor in catalysis. DCTP contacts are provided by glutamine 152, tyrosine 166, and glutamine 176.

This sequence belongs to the dCTP deaminase family. In terms of assembly, homotrimer.

The catalysed reaction is dCTP + H2O + H(+) = dUTP + NH4(+). It functions in the pathway pyrimidine metabolism; dUMP biosynthesis; dUMP from dCTP (dUTP route): step 1/2. Catalyzes the deamination of dCTP to dUTP. The chain is dCTP deaminase from Sulfurovum sp. (strain NBC37-1).